The sequence spans 88 residues: Homeobox protein knotted-1-like 2 (88 aa).

The region spanning 4 to 24 is the ELK domain; the sequence is ELKHELKQGYRDKLVDIREEI. A DNA-binding region (homeobox; TALE-type) is located at residues 25-88; it reads LRKRRAGKLP…NQRKRNWHNN (64 aa).

This sequence belongs to the TALE/KNOX homeobox family. As to expression, expressed in all tissues examined. Highest expression in leaves.

It is found in the nucleus. This Zea mays (Maize) protein is Homeobox protein knotted-1-like 2 (KNOX2).